The following is a 356-amino-acid chain: Tyrosine recombinase XerS (356 aa).

The 106-residue stretch at 16 to 121 (IMPSYVLEYY…ALSSLYKYLT (106 aa)) folds into the Core-binding (CB) domain. The region spanning 169 to 354 (GFLDYIDNEY…INEEQKNALD (186 aa)) is the Tyr recombinase domain. Active-site residues include R210, K234, H306, R309, and H332. Catalysis depends on Y341, which acts as the O-(3'-phospho-DNA)-tyrosine intermediate.

This sequence belongs to the 'phage' integrase family. XerS subfamily.

The protein resides in the cytoplasm. FtsK is required for recombination. Functionally, site-specific tyrosine recombinase, which acts by catalyzing the cutting and rejoining of the recombining DNA molecules. Essential to convert dimers of the bacterial chromosome into monomers to permit their segregation at cell division. The protein is Tyrosine recombinase XerS of Lactococcus lactis subsp. lactis (strain IL1403) (Streptococcus lactis).